A 241-amino-acid chain; its full sequence is 1-(5-phosphoribosyl)-5-[(5-phosphoribosylamino)methylideneamino] imidazole-4-carboxamide isomerase (241 aa).

The active-site Proton acceptor is the Asp-11. Residue Asp-130 is the Proton donor of the active site.

It belongs to the HisA/HisF family.

It localises to the cytoplasm. The catalysed reaction is 1-(5-phospho-beta-D-ribosyl)-5-[(5-phospho-beta-D-ribosylamino)methylideneamino]imidazole-4-carboxamide = 5-[(5-phospho-1-deoxy-D-ribulos-1-ylimino)methylamino]-1-(5-phospho-beta-D-ribosyl)imidazole-4-carboxamide. Its pathway is amino-acid biosynthesis; L-histidine biosynthesis; L-histidine from 5-phospho-alpha-D-ribose 1-diphosphate: step 4/9. The protein is 1-(5-phosphoribosyl)-5-[(5-phosphoribosylamino)methylideneamino] imidazole-4-carboxamide isomerase of Acidothermus cellulolyticus (strain ATCC 43068 / DSM 8971 / 11B).